Consider the following 229-residue polypeptide: UPF0173 metal-dependent hydrolase SERP1270 (229 aa).

Belongs to the UPF0173 family.

In Staphylococcus epidermidis (strain ATCC 35984 / DSM 28319 / BCRC 17069 / CCUG 31568 / BM 3577 / RP62A), this protein is UPF0173 metal-dependent hydrolase SERP1270.